Consider the following 320-residue polypeptide: RNA polymerase sigma factor SigA2 (320 aa).

The segment at 89-159 (MIEANLRLVV…TRAIAQQSRT (71 aa)) is sigma-70 factor domain-2. The Interaction with polymerase core subunit RpoC signature appears at 113–116 (DLIQ). A sigma-70 factor domain-3 region spans residues 168–243 (EKLNKLKKTQ…EDEQSSPSDY (76 aa)). Residues 256-310 (LMAELTPQQQAVIALRYGLDEGDSLSLAKVGERLNISRERVRKLERQAMDHLRRR) form a sigma-70 factor domain-4 region. The segment at residues 282-301 (LAKVGERLNISRERVRKLER) is a DNA-binding region (H-T-H motif).

The protein belongs to the sigma-70 factor family.

It is found in the cytoplasm. In terms of biological role, sigma factors are initiation factors that promote the attachment of RNA polymerase to specific initiation sites and are then released. This sigma factor is a component of the biological clock pathway that affects the circadian expression of a subset of genes in this bacterium. The chain is RNA polymerase sigma factor SigA2 (sigA2) from Synechococcus elongatus (strain ATCC 33912 / PCC 7942 / FACHB-805) (Anacystis nidulans R2).